The following is a 213-amino-acid chain: Large ribosomal subunit protein uL3 (213 aa).

It belongs to the universal ribosomal protein uL3 family. In terms of assembly, part of the 50S ribosomal subunit. Forms a cluster with proteins L14 and L19.

One of the primary rRNA binding proteins, it binds directly near the 3'-end of the 23S rRNA, where it nucleates assembly of the 50S subunit. This chain is Large ribosomal subunit protein uL3, found in Bifidobacterium longum (strain DJO10A).